The sequence spans 444 residues: NAD-capped RNA hydrolase NUDT12 (444 aa).

2 ANK repeats span residues 11-40 and 60-80; these read EIIS…SLLN and SRQT…ANLL. K167 carries the N6-succinyllysine modification. Residues C266 and C269 each contribute to the Zn(2+) site. Residue K274 is modified to N6-succinyllysine. Residues C284 and C289 each contribute to the Zn(2+) site. Substrate contacts are provided by residues Y300, 336 to 338, E352, E356, and E397; that span reads AGF. In terms of domain architecture, Nudix hydrolase spans 301–435; the sequence is PRVDPVVIMQ…SRAIAHQLIK (135 aa). Residues A336, E352, E356, and E397 each coordinate Mg(2+). Residues 337–358 carry the Nudix box motif; the sequence is GFIEPGETIEDAVRREVEEESG. Positions 442 to 444 match the Microbody targeting signal motif; that stretch reads PNL.

It belongs to the Nudix hydrolase family. NudC subfamily. In terms of assembly, homodimer. Homodimerization is essential for its catalytic activity and protein stability. Interacts (via ANK repeats) with BLMH. Mg(2+) serves as cofactor. Zn(2+) is required as a cofactor.

It localises to the cytoplasm. It is found in the peroxisome. The protein resides in the cytoplasmic granule. The catalysed reaction is a 5'-end NAD(+)-phospho-ribonucleoside in mRNA + H2O = a 5'-end phospho-adenosine-phospho-ribonucleoside in mRNA + beta-nicotinamide D-ribonucleotide + 2 H(+). It carries out the reaction NAD(+) + H2O = beta-nicotinamide D-ribonucleotide + AMP + 2 H(+). It catalyses the reaction NADH + H2O = reduced beta-nicotinamide D-ribonucleotide + AMP + 2 H(+). The enzyme catalyses NADPH + H2O = reduced beta-nicotinamide D-ribonucleotide + adenosine 2',5'-bisphosphate + 2 H(+). Functionally, mRNA decapping enzyme that specifically removes the nicotinamide adenine dinucleotide (NAD) cap from a subset of mRNAs by hydrolyzing the diphosphate linkage to produce nicotinamide mononucleotide (NMN) and 5' monophosphate mRNA. The NAD-cap is present at the 5'-end of some RNAs; in contrast to the canonical N7 methylguanosine (m7G) cap, the NAD cap promotes mRNA decay. Preferentially acts on NAD-capped transcripts in response to nutrient stress. Also acts on free nicotinamide adenine dinucleotide molecules: hydrolyzes NAD(H) into NMN(H) and AMP, and NADPH into NMNH and 2',5'-ADP. May act to regulate the concentration of peroxisomal nicotinamide nucleotide cofactors required for oxidative metabolism in this organelle. Regulates the levels of circadian clock components PER1, PER2, PER3 and CRY2 in the liver. This Bos taurus (Bovine) protein is NAD-capped RNA hydrolase NUDT12.